The primary structure comprises 59 residues: Cecropin-C (59 aa).

An N-terminal signal peptide occupies residues 1–23 (MNFKLIFLVALVLMAAFLGQTEG). At Val58 the chain carries Valine amide.

This sequence belongs to the cecropin family.

It is found in the secreted. Functionally, cecropins have lytic and antibacterial activity against several Gram-positive and Gram-negative bacteria. This is Cecropin-C (CecC) from Anopheles gambiae (African malaria mosquito).